The chain runs to 310 residues: Zinc finger protein 346 (310 aa).

At Met-1 the chain carries N-acetylmethionine. Low complexity predominate over residues Met-1 to Ala-12. Residues Met-1–Gly-33 form a disordered region. The Matrin-type 1 zinc finger occupies Phe-70 to Tyr-104. Zn(2+) contacts are provided by Cys-75, Cys-78, His-91, and His-97. Lys-114 is covalently cross-linked (Glycyl lysine isopeptide (Lys-Gly) (interchain with G-Cter in SUMO2)). Residues Asp-131–Lys-165 form a Matrin-type 2 zinc finger. Zn(2+) is bound by residues Cys-136, Cys-139, His-152, and His-158. Lys-170 is covalently cross-linked (Glycyl lysine isopeptide (Lys-Gly) (interchain with G-Cter in SUMO2)). 2 Matrin-type zinc fingers span residues Asp-198–Leu-232 and Gly-252–Thr-286. The tract at residues Lys-278–Asp-310 is disordered. Polar residues-rich tracts occupy residues Ser-283–Gly-292 and Gln-299–Asp-310.

As to quaternary structure, forms a heteromeric complex with XPO5 and ILF3. Found in a nuclear export complex with XPO5, RAN, ILF3, ZNF346 and double-stranded RNA. Interacts with XPO5. Interacts with ILF3 in an RNA-independent manner.

Its subcellular location is the nucleus. The protein resides in the nucleolus. It is found in the cytoplasm. In terms of biological role, binds with low affinity to dsDNA and ssRNA, and with high affinity to dsRNA, with no detectable sequence specificity. The sequence is that of Zinc finger protein 346 (ZNF346) from Pongo abelii (Sumatran orangutan).